The following is a 464-amino-acid chain: MREKTPKQIVDLLDKYIVGQNEAKKSVAIALYNRYRRAQLPEDVQKDITPKNILMAGPTGVGKTEIARRLADIVDAPFVKVEATKFTEVGYVGRDVESMVRDLANEAVRIVEKEEFVKVESQAIRQANKTLVRLLVPGVKRNNRQNQMQQMQEMMQSLLAGGGMPEETEEVTDEIRNQRLSVAEKLDRGLLENEEVIIEVEQAPKANPMGDMMGQMGMDMSSMLGDMLPKKKVKRTLPVGQARKLLVQEEEKKLVNYDDIYQKAMDRAGQSGIIFIDEIDKITAADKRNSAGVSREGVQRDILPIVEGSTVSTKYGPLSTDHILFIAAGAFAESKPSDLIPELQGRFPIRVELNALTKDDFVRILKDPQNSLLKQYIALLKADGVDLVFTAEAVDKIAEIAFEVNQGTDNIGARRLATILEKLLEEVLYEGPDMEMGQITITQAYVEQKLSDIVKNKDLTKFIL.

ATP contacts are provided by residues valine 18, 60-65, aspartate 277, glutamate 342, and arginine 414; that span reads GVGKTE.

The protein belongs to the ClpX chaperone family. HslU subfamily. In terms of assembly, a double ring-shaped homohexamer of HslV is capped on each side by a ring-shaped HslU homohexamer. The assembly of the HslU/HslV complex is dependent on binding of ATP.

Its subcellular location is the cytoplasm. In terms of biological role, ATPase subunit of a proteasome-like degradation complex; this subunit has chaperone activity. The binding of ATP and its subsequent hydrolysis by HslU are essential for unfolding of protein substrates subsequently hydrolyzed by HslV. HslU recognizes the N-terminal part of its protein substrates and unfolds these before they are guided to HslV for hydrolysis. The protein is ATP-dependent protease ATPase subunit HslU of Lactobacillus delbrueckii subsp. bulgaricus (strain ATCC BAA-365 / Lb-18).